Here is a 200-residue protein sequence, read N- to C-terminus: Large ribosomal subunit protein bL25 (200 aa).

It belongs to the bacterial ribosomal protein bL25 family. CTC subfamily. Part of the 50S ribosomal subunit; part of the 5S rRNA/L5/L18/L25 subcomplex. Contacts the 5S rRNA. Binds to the 5S rRNA independently of L5 and L18.

This is one of the proteins that binds to the 5S RNA in the ribosome where it forms part of the central protuberance. The sequence is that of Large ribosomal subunit protein bL25 from Nocardia farcinica (strain IFM 10152).